The primary structure comprises 209 residues: V-type ATP synthase subunit D (209 aa).

The protein belongs to the V-ATPase D subunit family.

Produces ATP from ADP in the presence of a proton gradient across the membrane. The chain is V-type ATP synthase subunit D from Anaeromyxobacter dehalogenans (strain 2CP-C).